We begin with the raw amino-acid sequence, 1169 residues long: Integrin alpha-X (1169 aa).

The signal sequence occupies residues 1-19; it reads MSCTWIAFLLLLGFVSCLG. The Extracellular segment spans residues 20 to 1116; sequence FNLDAEKLTH…EMYKVHNPVP (1097 aa). FG-GAP repeat units follow at residues 23-78 and 79-138; these read DAEK…NCEP and ISLQ…QSQN. Cysteine 69 and cysteine 76 form a disulfide bridge. N-linked (GlcNAc...) asparagine glycosylation occurs at asparagine 89. Disulfide bonds link cysteine 108-cysteine 126 and cysteine 116-cysteine 146. One can recognise a VWFA domain in the interval 152–330; sequence DIVFLIDGSG…DALKDIENQL (179 aa). Mg(2+) contacts are provided by aspartate 158, serine 160, serine 162, and aspartate 260. Asparagine 267 carries N-linked (GlcNAc...) asparagine glycosylation. FG-GAP repeat units lie at residues 341 to 392, 393 to 444, 445 to 505, 508 to 566, and 571 to 631; these read ETPS…PTFI, NMSQ…SRHW, RPKS…GSRW, GTTL…QDIA, and QRIS…FTPA. N-linked (GlcNAc...) asparagine glycosylation is present at asparagine 393. Positions 467, 469, 471, and 475 each coordinate Ca(2+). A disulfide bond links cysteine 496 and cysteine 507. Ca(2+)-binding residues include aspartate 531, asparagine 533, aspartate 535, aspartate 539, aspartate 594, aspartate 598, and aspartate 602. 2 cysteine pairs are disulfide-bonded: cysteine 640-cysteine 721 and cysteine 656-cysteine 711. A glycan (N-linked (GlcNAc...) asparagine) is linked at asparagine 734. Intrachain disulfides connect cysteine 770–cysteine 776 and cysteine 858–cysteine 873. The N-linked (GlcNAc...) asparagine glycan is linked to asparagine 949. Intrachain disulfides connect cysteine 1007/cysteine 1031 and cysteine 1036/cysteine 1041. 2 N-linked (GlcNAc...) asparagine glycosylation sites follow: asparagine 1059 and asparagine 1084. Residues 1117–1137 form a helical membrane-spanning segment; that stretch reads LIVGSSVGGLLLLAIITAILY. At 1138–1169 the chain is on the cytoplasmic side; the sequence is KAGFFKRQYKEMLEEANGQFVSDGTPTPQVAQ. A GFFKR motif motif is present at residues 1140–1144; the sequence is GFFKR.

The protein belongs to the integrin alpha chain family. In terms of assembly, heterodimer of an alpha and a beta subunit. Alpha-X associates with beta-2.

The protein localises to the membrane. Functionally, integrin alpha-X/beta-2 is a receptor for fibrinogen. It recognizes the sequence G-P-R in fibrinogen. It mediates cell-cell interaction during inflammatory responses. It is especially important in monocyte adhesion and chemotaxis. This is Integrin alpha-X (Itgax) from Mus musculus (Mouse).